The chain runs to 666 residues: TATA box-binding protein-associated factor RNA polymerase I subunit B (666 aa).

The RRN7-type zinc-finger motif lies at 1 to 29 (MICTECENDAFDEEDDGYYYCQRCGVQVE). Zn(2+) contacts are provided by C3, C6, C21, and C24. Residues 30-64 (NLIQTGVDDGDLIGEGGGTQGALYNPKHRRTEPQP) are B-reader. 2 disordered regions span residues 45–110 (GGGT…VDKE) and 189–208 (DSEHQSEDGEVKDAKRLKRH). Residues 65–80 (ITPSQPRFTDDTSRYS) are B-linker. Over residues 78–89 (RYSQFKSQFESE) the composition is skewed to polar residues. Residues 81–285 (QFKSQFESEN…REQMGERSAA (205 aa)) form an N-terminal cyclin fold region. Composition is skewed to basic and acidic residues over residues 90 to 110 (NGNKELPREVKRAPDSYVDKE) and 189 to 202 (DSEHQSEDGEVKDA). Residues 286–288 (CPV) form a C-terminal cyclin fold region. The segment at 515 to 548 (SDGNNPCSSSSRRNESVSIGLDLSSSEHRESSSP) is disordered. Residues 539–548 (SSEHRESSSP) show a composition bias toward basic and acidic residues.

The protein belongs to the RRN7/TAF1B family. As to quaternary structure, interacts with TFIIF. Interacts with MEE14/CBP1, TBP1 and NRPB1 (via CTD). As to expression, expressed at high levels in seedlings, inflorescences and young siliques and at lower levels in roots. Not detected in leaves and stems. Detected in root tips and shoot apical meristems, in anthers, primarily in microspores with weaker expression in mature pollen grains and in the central cell of the mature female gametophyte. Not expressed in synergids, egg cells, antipodal cells, endosperm cells and fertilized egg cells.

The protein localises to the nucleus. It localises to the nucleolus. In terms of biological role, component of RNA polymerase I core factor complex that acts as a GTF2B/TFIIB-like factor and plays a key role in multiple steps during transcription initiation such as pre-initiation complex (PIC) assembly and postpolymerase recruitment events in polymerase I (Pol I) transcription. Binds rDNA promoters and plays a role in Pol I recruitment. Required for the development of the one-cell zygote and endosperm in embryos. Required for micropylar pollen tube guidance, but has no effect on ovule development and gametophytic cell fate specification. May regulate the transcription of secreted cysteine-rich peptide (CRP) genes in the embryo sac. This Arabidopsis thaliana (Mouse-ear cress) protein is TATA box-binding protein-associated factor RNA polymerase I subunit B.